An 86-amino-acid chain; its full sequence is Defensin-like protein 259 (86 aa).

Residues Met-1–Ala-25 form the signal peptide. Cystine bridges form between Cys-60-Cys-76, Cys-66-Cys-83, and Cys-70-Cys-85.

This sequence belongs to the DEFL family.

The protein localises to the secreted. In Arabidopsis thaliana (Mouse-ear cress), this protein is Defensin-like protein 259.